The chain runs to 370 residues: Histidinol-phosphate aminotransferase 2 (370 aa).

K230 bears the N6-(pyridoxal phosphate)lysine mark.

Belongs to the class-II pyridoxal-phosphate-dependent aminotransferase family. Histidinol-phosphate aminotransferase subfamily. As to quaternary structure, homodimer. Pyridoxal 5'-phosphate is required as a cofactor.

The enzyme catalyses L-histidinol phosphate + 2-oxoglutarate = 3-(imidazol-4-yl)-2-oxopropyl phosphate + L-glutamate. It functions in the pathway amino-acid biosynthesis; L-histidine biosynthesis; L-histidine from 5-phospho-alpha-D-ribose 1-diphosphate: step 7/9. In Pseudomonas fluorescens (strain ATCC BAA-477 / NRRL B-23932 / Pf-5), this protein is Histidinol-phosphate aminotransferase 2.